The chain runs to 396 residues: Elongation factor Tu (396 aa).

The region spanning 10 to 206 is the tr-type G domain; that stretch reads KPHCNIGTIG…AVDAYIPQPE (197 aa). Residues 19–26 are G1; the sequence is GHVDHGKT. 19-26 provides a ligand contact to GTP; the sequence is GHVDHGKT. Thr-26 provides a ligand contact to Mg(2+). The interval 60-64 is G2; that stretch reads GITIS. The G3 stretch occupies residues 81–84; sequence DCPG. GTP is bound by residues 81-85 and 136-139; these read DCPGH and NKCD. A G4 region spans residues 136-139; sequence NKCD. A G5 region spans residues 174 to 176; that stretch reads SAL.

This sequence belongs to the TRAFAC class translation factor GTPase superfamily. Classic translation factor GTPase family. EF-Tu/EF-1A subfamily. In terms of assembly, monomer.

The protein localises to the cytoplasm. It catalyses the reaction GTP + H2O = GDP + phosphate + H(+). Functionally, GTP hydrolase that promotes the GTP-dependent binding of aminoacyl-tRNA to the A-site of ribosomes during protein biosynthesis. The protein is Elongation factor Tu of Rhodopseudomonas palustris (strain BisB18).